A 185-amino-acid polypeptide reads, in one-letter code: Protein GrpE (185 aa).

It belongs to the GrpE family. In terms of assembly, homodimer.

It is found in the cytoplasm. Participates actively in the response to hyperosmotic and heat shock by preventing the aggregation of stress-denatured proteins, in association with DnaK and GrpE. It is the nucleotide exchange factor for DnaK and may function as a thermosensor. Unfolded proteins bind initially to DnaJ; upon interaction with the DnaJ-bound protein, DnaK hydrolyzes its bound ATP, resulting in the formation of a stable complex. GrpE releases ADP from DnaK; ATP binding to DnaK triggers the release of the substrate protein, thus completing the reaction cycle. Several rounds of ATP-dependent interactions between DnaJ, DnaK and GrpE are required for fully efficient folding. The protein is Protein GrpE of Methanobrevibacter smithii (strain ATCC 35061 / DSM 861 / OCM 144 / PS).